We begin with the raw amino-acid sequence, 888 residues long: E3 ubiquitin-protein ligase SH3RF1 (888 aa).

Residues 12-53 (CPVCLERLDASAKVLPCQHTFCKRCLLGIVGSRNELRCPECR) form an RING-type zinc finger. 2 consecutive SH3 domains span residues 134–193 (PQLP…IIKP) and 196–259 (QPPP…FNSA). The disordered stretch occupies residues 275-321 (DAGECSSAAAQSSTAPKHSDTKKNTKKRHSFTSLTMANKSSQASQNR). The segment at 292–362 (HSDTKKNTKK…APSQVHISTT (71 aa)) is interaction with RAC1. A Phosphoserine modification is found at S304. A compositionally biased stretch (polar residues) spans 305-321 (FTSLTMANKSSQASQNR). The segment at 440–543 (HLRPQTRPSV…STAGGPAQKL (104 aa)) is interaction with AKT2. The SH3 3 domain occupies 445 to 506 (TRPSVYVAIY…PGNYVAPVTR (62 aa)). Disordered stretches follow at residues 516–549 (VPMSTAGQTSRGVTMVSPSTAGGPAQKLQGNGVA), 617–637 (SPASVGLPHHSLASPQPAPLM), and 693–741 (PDSA…ASPT). The segment covering 520-535 (TAGQTSRGVTMVSPST) has biased composition (polar residues). The residue at position 532 (S532) is a Phosphoserine. Positions 693 to 704 (PDSASLACGNSS) are enriched in polar residues. Positions 707–718 (KPDKDSKKEKKG) are enriched in basic and acidic residues. S735 bears the Phosphoserine mark. Residues 829 to 888 (VVCERHRVVVSYPPQSEAELELKEGDIVFVHKKREDGWFKGTLQRNGKTGLFPGSFVENI) form the SH3 4 domain.

This sequence belongs to the SH3RF family. Interacts with HERP1. Interacts with RAC1; in a GTP-dependent manner. Interacts with MAP3K10/MLK2 and MAP3K11/MLK3. Interacts with MAPK8IP; this interaction leads to the PJAC complex (POSH-JIP or SH3RF1/MAPK8IP apoptotic complex) with a 1:1 ratio. Interacts with SIAH1. Probably part of a signaling complex that may contain SH3RF1, MAPK8IP, DLK1, MAP2K4/MKK4, MAP2K7/MKK7, MAPK8/JNK1, MAPK9/JNK2, AKT1 and AKT2. Found in a complex with RAC2, MAP3K7/TAK1, MAP2K7/MKK7, MAPK8IP1/JIP1, MAPK8/JNK1 and MAPK9/JNK2. Found in a complex with RAC1, MAP3K11/MLK3, MAP2K7/MKK7, MAPK8IP1/JIP1 and MAPK8/JNK1. Interacts with SH3RF2. Post-translationally, phosphorylated at Ser-304 by AKT1 and AKT2. When phosphorylated, it has reduced ability to bind Rac. Autoubiquitinated. Ubiquitinated by SH3RF2, leading to proteasome-mediated degradation.

The protein localises to the cytoplasm. Its subcellular location is the perinuclear region. The protein resides in the cell projection. It is found in the lamellipodium. It localises to the golgi apparatus. The protein localises to the trans-Golgi network. It carries out the reaction S-ubiquitinyl-[E2 ubiquitin-conjugating enzyme]-L-cysteine + [acceptor protein]-L-lysine = [E2 ubiquitin-conjugating enzyme]-L-cysteine + N(6)-ubiquitinyl-[acceptor protein]-L-lysine.. It participates in protein modification; protein ubiquitination. Functionally, has E3 ubiquitin-protein ligase activity. In the absence of an external substrate, it can catalyze self-ubiquitination. Stimulates ubiquitination of potassium channel KCNJ1, enhancing it's dynamin-dependent and clathrin-independent endocytosis. Acts as a scaffold protein that coordinates with MAPK8IP1/JIP1 in organizing different components of the JNK pathway, including RAC1 or RAC2, MAP3K11/MLK3 or MAP3K7/TAK1, MAP2K7/MKK7, MAPK8/JNK1 and/or MAPK9/JNK2 into a functional multiprotein complex to ensure the effective activation of the JNK signaling pathway. Regulates the differentiation of CD4(+) and CD8(+) T-cells and promotes T-helper 1 (Th1) cell differentiation. Regulates the activation of MAPK8/JNK1 and MAPK9/JNK2 in CD4(+) T-cells and the activation of MAPK8/JNK1 in CD8(+) T-cells. Controls proper cortical neuronal migration and the formation of proximal cytoplasmic dilation in the leading process (PCDLP) in migratory neocortical neurons by regulating the proper localization of activated RAC1 and F-actin assembly. The polypeptide is E3 ubiquitin-protein ligase SH3RF1 (SH3RF1) (Pongo abelii (Sumatran orangutan)).